Reading from the N-terminus, the 45-residue chain is Iota-conotoxin-like R11.10 (45 aa).

4 disulfides stabilise this stretch: Cys-5–Cys-19, Cys-12–Cys-22, Cys-18–Cys-27, and Cys-21–Cys-36. At Leu-43 the chain carries D-leucine. Arg-45 is a propeptide (removed by a carboxypeptidase).

This sequence belongs to the conotoxin I1 superfamily. In terms of tissue distribution, expressed by the venom duct.

Its subcellular location is the secreted. Functionally, iota-conotoxins bind to voltage-gated sodium channels (Nav) and act as agonists by shifting the voltage-dependence of activation to more hyperpolarized levels. Produces general excitatory symptoms. This Conus radiatus (Rayed cone) protein is Iota-conotoxin-like R11.10.